The primary structure comprises 286 residues: Large ribosomal subunit protein uL4m (286 aa).

Residues 1-26 (MTIKRNLVKTLQSIRYQATTATAHAE) constitute a mitochondrion transit peptide. The interval 85-132 (RRVGASNPPGRSENGFSRRKLMPQKGSGRARVGDANSPTRHNGGRALA) is disordered.

The protein belongs to the universal ribosomal protein uL4 family. In terms of assembly, component of the mitochondrial large ribosomal subunit (mt-LSU). Mature yeast 74S mitochondrial ribosomes consist of a small (37S) and a large (54S) subunit. The 37S small subunit contains a 15S ribosomal RNA (15S mt-rRNA) and 34 different proteins. The 54S large subunit contains a 21S rRNA (21S mt-rRNA) and 46 different proteins.

It localises to the mitochondrion. In terms of biological role, component of the mitochondrial ribosome (mitoribosome), a dedicated translation machinery responsible for the synthesis of mitochondrial genome-encoded proteins, including at least some of the essential transmembrane subunits of the mitochondrial respiratory chain. The mitoribosomes are attached to the mitochondrial inner membrane and translation products are cotranslationally integrated into the membrane. This chain is Large ribosomal subunit protein uL4m (YML6), found in Saccharomyces cerevisiae (strain ATCC 204508 / S288c) (Baker's yeast).